The following is a 207-amino-acid chain: Outer-membrane lipoprotein carrier protein (207 aa).

The signal sequence occupies residues 1-21 (MRLIRMLLATALTFSVIPAHA).

It belongs to the LolA family. As to quaternary structure, monomer.

The protein localises to the periplasm. Functionally, participates in the translocation of lipoproteins from the inner membrane to the outer membrane. Only forms a complex with a lipoprotein if the residue after the N-terminal Cys is not an aspartate (The Asp acts as a targeting signal to indicate that the lipoprotein should stay in the inner membrane). The polypeptide is Outer-membrane lipoprotein carrier protein (Pseudomonas syringae pv. tomato (strain ATCC BAA-871 / DC3000)).